The sequence spans 115 residues: Probable mycobacterial cidal antitoxin Rv3188 (115 aa).

Belongs to the MbcA/ParS/Xre antitoxin family. As to quaternary structure, forms a heterotetramer with cognate toxin Rv3189.

Probable antitoxin component of a type II toxin-antitoxin (TA) system. Neutralizes the activity of cognate toxin Rv3189 by blocking access to the toxin active site. This is Probable mycobacterial cidal antitoxin Rv3188 from Mycobacterium tuberculosis (strain ATCC 25618 / H37Rv).